The following is a 479-amino-acid chain: Adenosylhomocysteinase (479 aa).

Thr66, Asp142, and Glu203 together coordinate substrate. 204 to 206 contacts NAD(+); the sequence is TTT. 2 residues coordinate substrate: Lys233 and Asp237. Residues Asn238, 267–272, Glu290, Asn325, 346–348, and Asn394 each bind NAD(+); these read GYGDVG and IGH.

This sequence belongs to the adenosylhomocysteinase family. The cofactor is NAD(+).

The protein resides in the cytoplasm. It catalyses the reaction S-adenosyl-L-homocysteine + H2O = L-homocysteine + adenosine. Its pathway is amino-acid biosynthesis; L-homocysteine biosynthesis; L-homocysteine from S-adenosyl-L-homocysteine: step 1/1. Its function is as follows. May play a key role in the regulation of the intracellular concentration of adenosylhomocysteine. The protein is Adenosylhomocysteinase of Oleidesulfovibrio alaskensis (strain ATCC BAA-1058 / DSM 17464 / G20) (Desulfovibrio alaskensis).